Here is a 220-residue protein sequence, read N- to C-terminus: Probable GTP-binding protein EngB (220 aa).

Positions 26–200 (EGIEIAFAGR…RAKLDEWYAP (175 aa)) constitute an EngB-type G domain. Residues 34–41 (GRSNTGKS), 61–65 (GRTQL), 79–82 (DLPG), 146–149 (TKAD), and 179–181 (FSS) contribute to the GTP site. Mg(2+) contacts are provided by Ser-41 and Thr-63.

The protein belongs to the TRAFAC class TrmE-Era-EngA-EngB-Septin-like GTPase superfamily. EngB GTPase family. Mg(2+) is required as a cofactor.

Its function is as follows. Necessary for normal cell division and for the maintenance of normal septation. This Vibrio cholerae serotype O1 (strain ATCC 39541 / Classical Ogawa 395 / O395) protein is Probable GTP-binding protein EngB.